Consider the following 419-residue polypeptide: 3-isopropylmalate dehydratase large subunit (419 aa).

The [4Fe-4S] cluster site is built by Cys-300, Cys-360, and Cys-363.

This sequence belongs to the aconitase/IPM isomerase family. LeuC type 2 subfamily. As to quaternary structure, heterodimer of LeuC and LeuD. Requires [4Fe-4S] cluster as cofactor.

The catalysed reaction is (2R,3S)-3-isopropylmalate = (2S)-2-isopropylmalate. It functions in the pathway amino-acid biosynthesis; L-leucine biosynthesis; L-leucine from 3-methyl-2-oxobutanoate: step 2/4. Functionally, catalyzes the isomerization between 2-isopropylmalate and 3-isopropylmalate, via the formation of 2-isopropylmaleate. This is 3-isopropylmalate dehydratase large subunit from Acetivibrio thermocellus (strain ATCC 27405 / DSM 1237 / JCM 9322 / NBRC 103400 / NCIMB 10682 / NRRL B-4536 / VPI 7372) (Clostridium thermocellum).